The chain runs to 155 residues: MRLRLIAVGSRMPKWVEEGWHEYAKRLPSELALELVEIPLNTRGKNADVARFIRQEGEAMLAKVGHNERIVTLEVHGKPWSTEQLAVELDRWRLDSRTVNFMVGGPEGLAPEVCARADQRWSLSPLTLPHPLVRILIGEQLYRAWTVLSGHPYHK.

S-adenosyl-L-methionine is bound by residues L73, G104, and 123–128 (LSPLTL).

The protein belongs to the RNA methyltransferase RlmH family. Homodimer.

The protein localises to the cytoplasm. It carries out the reaction pseudouridine(1915) in 23S rRNA + S-adenosyl-L-methionine = N(3)-methylpseudouridine(1915) in 23S rRNA + S-adenosyl-L-homocysteine + H(+). In terms of biological role, specifically methylates the pseudouridine at position 1915 (m3Psi1915) in 23S rRNA. In Pseudomonas fluorescens (strain ATCC BAA-477 / NRRL B-23932 / Pf-5), this protein is Ribosomal RNA large subunit methyltransferase H.